The primary structure comprises 279 residues: Ribosomal RNA small subunit methyltransferase J (279 aa).

S-adenosyl-L-methionine contacts are provided by residues Glu-138–Arg-139 and Asp-194.

Belongs to the methyltransferase superfamily. RsmJ family.

It localises to the cytoplasm. It carries out the reaction guanosine(1516) in 16S rRNA + S-adenosyl-L-methionine = N(2)-methylguanosine(1516) in 16S rRNA + S-adenosyl-L-homocysteine + H(+). Its function is as follows. Specifically methylates the guanosine in position 1516 of 16S rRNA. This Acinetobacter baumannii (strain ACICU) protein is Ribosomal RNA small subunit methyltransferase J.